Reading from the N-terminus, the 43-residue chain is Potassium channel toxin gamma-KTx 3.2 (43 aa).

4 disulfide bridges follow: cysteine 5–cysteine 23, cysteine 11–cysteine 34, cysteine 20–cysteine 39, and cysteine 24–cysteine 41.

Belongs to the ergtoxin family. Gamma-KTx 3 subfamily. As to expression, expressed by the venom gland.

The protein resides in the secreted. In terms of biological role, blocks Kv11/ERG potassium channels. This chain is Potassium channel toxin gamma-KTx 3.2, found in Centruroides elegans (Bark scorpion).